The following is a 274-amino-acid chain: Rhamnulose-1-phosphate aldolase (274 aa).

Glu-117 is a catalytic residue. Residues His-141, His-143, and His-212 each contribute to the Zn(2+) site.

Belongs to the aldolase class II family. RhaD subfamily. In terms of assembly, homotetramer. Zn(2+) serves as cofactor.

Its subcellular location is the cytoplasm. It catalyses the reaction L-rhamnulose 1-phosphate = (S)-lactaldehyde + dihydroxyacetone phosphate. It participates in carbohydrate degradation; L-rhamnose degradation; glycerone phosphate from L-rhamnose: step 3/3. Functionally, catalyzes the reversible cleavage of L-rhamnulose-1-phosphate to dihydroxyacetone phosphate (DHAP) and L-lactaldehyde. This is Rhamnulose-1-phosphate aldolase from Shigella dysenteriae serotype 1 (strain Sd197).